Reading from the N-terminus, the 206-residue chain is Large ribosomal subunit protein uL4 (206 aa).

A disordered region spans residues 44 to 87 (KRQGTHATKTRGMKRGGGAKPWRQKGTGRARAGSTRSPLWRGGG).

The protein belongs to the universal ribosomal protein uL4 family. Part of the 50S ribosomal subunit.

One of the primary rRNA binding proteins, this protein initially binds near the 5'-end of the 23S rRNA. It is important during the early stages of 50S assembly. It makes multiple contacts with different domains of the 23S rRNA in the assembled 50S subunit and ribosome. Its function is as follows. Forms part of the polypeptide exit tunnel. The chain is Large ribosomal subunit protein uL4 from Maridesulfovibrio salexigens (strain ATCC 14822 / DSM 2638 / NCIMB 8403 / VKM B-1763) (Desulfovibrio salexigens).